A 440-amino-acid chain; its full sequence is Methylenetetrahydrofolate--tRNA-(uracil-5-)-methyltransferase TrmFO (440 aa).

14-19 (GAGLAG) is an FAD binding site.

The protein belongs to the MnmG family. TrmFO subfamily. FAD is required as a cofactor.

It is found in the cytoplasm. It carries out the reaction uridine(54) in tRNA + (6R)-5,10-methylene-5,6,7,8-tetrahydrofolate + NADH + H(+) = 5-methyluridine(54) in tRNA + (6S)-5,6,7,8-tetrahydrofolate + NAD(+). The catalysed reaction is uridine(54) in tRNA + (6R)-5,10-methylene-5,6,7,8-tetrahydrofolate + NADPH + H(+) = 5-methyluridine(54) in tRNA + (6S)-5,6,7,8-tetrahydrofolate + NADP(+). Its function is as follows. Catalyzes the folate-dependent formation of 5-methyl-uridine at position 54 (M-5-U54) in all tRNAs. This chain is Methylenetetrahydrofolate--tRNA-(uracil-5-)-methyltransferase TrmFO, found in Bdellovibrio bacteriovorus (strain ATCC 15356 / DSM 50701 / NCIMB 9529 / HD100).